We begin with the raw amino-acid sequence, 288 residues long: MDATVIDELQQILPIEQLRSTHASNDYVERPPAPCKQALSSPSLIVQTHKSDWSLATMPTALPRSISQCHQLQPLPQHLSQSSISSSMSQSTTASDQRLLASITPSPSGQSIIRTQPGAGAHPKVDGALKGEAEQSVGHSSDHLFICEECGRCKCVPCTAVRPLPSCWMCNQRCLCSAESLLDYGTCLCCVKGLFYHCSTDDEDNCADEPCSCGPSSCFIRWAAMSLISLFLPCLCCYLPTRGCLHMCQQGYDSLRRPGCRCKRHTNTVCRKISSSSSPFPKAQEKSV.

The 114-residue stretch at 154-267 (KCVPCTAVRP…PGCRCKRHTN (114 aa)) folds into the SPR domain.

Belongs to the sprouty family. As to quaternary structure, interacts with TESK1. Interacts with USP11. Interacts with CAV1 (via C-terminus). As to expression, expressed in the brain with expression the highest in Purkinje cell bodies and projections in the cerebellum (at protein level). Also expressed in central and peripheral nervous system ganglion cells, superior cervical ganglion and dorsal root ganglion (at protein level). Expressed in the retinal ganglion cell layer and the inner nuclear layer (at protein level).

The protein localises to the cytoplasm. Functionally, inhibits neurite branching, arbor length and neurite complexity. Inhibits EGF-mediated p42/44 ERK signaling. Negatively regulates the MAPK cascade, resulting in a reduction of extracellular matrix protein accumulation. May function as an antagonist of fibroblast growth factor (FGF) pathways and may negatively modulate respiratory organogenesis. This is Protein sprouty homolog 3 from Mus musculus (Mouse).